The following is a 68-amino-acid chain: Small ribosomal subunit protein bS21 (68 aa).

Belongs to the bacterial ribosomal protein bS21 family.

The chain is Small ribosomal subunit protein bS21 from Jannaschia sp. (strain CCS1).